A 342-amino-acid chain; its full sequence is Small GTPase LIP1 (342 aa).

The tract at residues 12-285 (KEQILAPLCG…FHGDPYKYNN (274 aa)) is small GTPase-like. Residues 29-36 (GDSGVGKT), 90-94 (DVSGH), and 160-163 (NKAD) contribute to the GTP site. Disordered stretches follow at residues 274 to 313 (TSFH…TPDN) and 323 to 342 (SVQE…DINV). The span at 323–333 (SVQETTNNGSA) shows a compositional bias: polar residues.

It belongs to the small GTPase superfamily.

The protein resides in the nucleus. The protein localises to the cytoplasm. Functional small GTPase that acts as a negative factor controlling the light-dependent period shortening of circadian rhythms and light-induced phase resetting during the subjective night. May protect the clock from excessive or mistimed light. Suppresses red and blue light-mediated photomorphogenesis and is required for light-controlled inhibition of endoreplication and tolerance to salt stress. The entrainment of the circadian clock is independent from the other pleiotropic effects. Could be a regulator of seedling establishment. In Arabidopsis thaliana (Mouse-ear cress), this protein is Small GTPase LIP1.